A 266-amino-acid chain; its full sequence is Protein-ADP-ribose hydrolase (266 aa).

The Macro domain occupies 74 to 265; that stretch reads TDLKDLKPIK…LYKEAFNRDA (192 aa). Residues Asp93, Ile94, and Asn107 each contribute to the ADP-D-ribose site. Residues Cys113, His118, and Cys120 each coordinate Zn(2+). Positions 120, 121, 122, 212, 213, 214, and 216 each coordinate ADP-D-ribose.

Belongs to the MacroD-type family. Zn-Macro subfamily. It depends on Zn(2+) as a cofactor.

The enzyme catalyses 4-O-(ADP-D-ribosyl)-L-aspartyl-[protein] + H2O = L-aspartyl-[protein] + ADP-D-ribose + H(+). In terms of biological role, ADP-ribosylhydrolase that specifically reverses the SirTM-mediated mono-ADP-ribosylation at an asparatate residue of GcvH-L, by releasing ADP-ribose from the target protein. May play a role in the regulation of the response to host-induced oxidative stress. The sequence is that of Protein-ADP-ribose hydrolase from Staphylococcus aureus (strain COL).